A 332-amino-acid chain; its full sequence is Holliday junction branch migration complex subunit RuvB (332 aa).

Positions Met1–Tyr181 are large ATPase domain (RuvB-L). ATP is bound by residues Leu20, Arg21, Gly62, Lys65, Thr66, Thr67, Glu128–Phe130, Arg171, Tyr181, and Arg218. Thr66 lines the Mg(2+) pocket. The small ATPAse domain (RuvB-S) stretch occupies residues Gln182–Asp252. Residues Arg255–Thr332 form a head domain (RuvB-H) region. DNA-binding residues include Arg291, Arg310, Arg312, and Arg315.

It belongs to the RuvB family. In terms of assembly, homohexamer. Forms an RuvA(8)-RuvB(12)-Holliday junction (HJ) complex. HJ DNA is sandwiched between 2 RuvA tetramers; dsDNA enters through RuvA and exits via RuvB. An RuvB hexamer assembles on each DNA strand where it exits the tetramer. Each RuvB hexamer is contacted by two RuvA subunits (via domain III) on 2 adjacent RuvB subunits; this complex drives branch migration. In the full resolvosome a probable DNA-RuvA(4)-RuvB(12)-RuvC(2) complex forms which resolves the HJ.

The protein resides in the cytoplasm. It carries out the reaction ATP + H2O = ADP + phosphate + H(+). Functionally, the RuvA-RuvB-RuvC complex processes Holliday junction (HJ) DNA during genetic recombination and DNA repair, while the RuvA-RuvB complex plays an important role in the rescue of blocked DNA replication forks via replication fork reversal (RFR). RuvA specifically binds to HJ cruciform DNA, conferring on it an open structure. The RuvB hexamer acts as an ATP-dependent pump, pulling dsDNA into and through the RuvAB complex. RuvB forms 2 homohexamers on either side of HJ DNA bound by 1 or 2 RuvA tetramers; 4 subunits per hexamer contact DNA at a time. Coordinated motions by a converter formed by DNA-disengaged RuvB subunits stimulates ATP hydrolysis and nucleotide exchange. Immobilization of the converter enables RuvB to convert the ATP-contained energy into a lever motion, pulling 2 nucleotides of DNA out of the RuvA tetramer per ATP hydrolyzed, thus driving DNA branch migration. The RuvB motors rotate together with the DNA substrate, which together with the progressing nucleotide cycle form the mechanistic basis for DNA recombination by continuous HJ branch migration. Branch migration allows RuvC to scan DNA until it finds its consensus sequence, where it cleaves and resolves cruciform DNA. In Streptococcus pyogenes serotype M18 (strain MGAS8232), this protein is Holliday junction branch migration complex subunit RuvB.